The primary structure comprises 250 residues: UDP-2,3-diacylglucosamine hydrolase (250 aa).

Residues Asp-8, His-10, Asp-41, Asn-79, and His-114 each contribute to the Mn(2+) site. 79–80 contacts substrate; the sequence is NR. The substrate site is built by Asp-122, Ser-160, Asp-172, Gln-175, and His-203. Residues His-203 and His-205 each coordinate Mn(2+).

Belongs to the LpxH family. Requires Mn(2+) as cofactor.

It is found in the cell inner membrane. It carries out the reaction UDP-2-N,3-O-bis[(3R)-3-hydroxytetradecanoyl]-alpha-D-glucosamine + H2O = 2-N,3-O-bis[(3R)-3-hydroxytetradecanoyl]-alpha-D-glucosaminyl 1-phosphate + UMP + 2 H(+). It functions in the pathway glycolipid biosynthesis; lipid IV(A) biosynthesis; lipid IV(A) from (3R)-3-hydroxytetradecanoyl-[acyl-carrier-protein] and UDP-N-acetyl-alpha-D-glucosamine: step 4/6. Functionally, hydrolyzes the pyrophosphate bond of UDP-2,3-diacylglucosamine to yield 2,3-diacylglucosamine 1-phosphate (lipid X) and UMP by catalyzing the attack of water at the alpha-P atom. Involved in the biosynthesis of lipid A, a phosphorylated glycolipid that anchors the lipopolysaccharide to the outer membrane of the cell. This is UDP-2,3-diacylglucosamine hydrolase from Xylella fastidiosa (strain M12).